Here is a 56-residue protein sequence, read N- to C-terminus: Large ribosomal subunit protein bL32 (56 aa).

The span at Met-1 to Trp-20 shows a compositional bias: basic residues. Positions Met-1 to Lys-21 are disordered.

This sequence belongs to the bacterial ribosomal protein bL32 family.

This is Large ribosomal subunit protein bL32 from Prochlorococcus marinus (strain MIT 9312).